The primary structure comprises 296 residues: Cytidine deaminase (296 aa).

CMP/dCMP-type deaminase domains follow at residues 48 to 168 (DADA…FGPV) and 187 to 296 (QNMN…FIEE). 89–91 (NME) contributes to the substrate binding site. Position 102 (His-102) interacts with Zn(2+). Catalysis depends on Glu-104, which acts as the Proton donor. Zn(2+) contacts are provided by Cys-129 and Cys-132.

Belongs to the cytidine and deoxycytidylate deaminase family. As to quaternary structure, homodimer. Requires Zn(2+) as cofactor.

The enzyme catalyses cytidine + H2O + H(+) = uridine + NH4(+). The catalysed reaction is 2'-deoxycytidine + H2O + H(+) = 2'-deoxyuridine + NH4(+). This enzyme scavenges exogenous and endogenous cytidine and 2'-deoxycytidine for UMP synthesis. In Pectobacterium carotovorum subsp. carotovorum (strain PC1), this protein is Cytidine deaminase.